The primary structure comprises 237 residues: MGRAHEVRAASMAKTAAKKSAANGRAAKEIYMAAKQGGIDPNSNLALRSVIDKAKANQIPRDVIERAIKRAAGGDAENYVSNRYEGIGPSNVAILVDTLTSNVNRAAAMIREVFNKNKGNPDGKVNFLFEDVAMFAFKNKKEDEVLEALMSDEVEINDLICEDETIIIYAPFKAYNSVKHSLDKLNIDEYLISEIRAIPIDKRIEIKDKQTKLQLQTLLDKLDELEDVQNVYHNAEL.

The protein belongs to the TACO1 family.

It localises to the cytoplasm. The polypeptide is Probable transcriptional regulatory protein MCAP_0598 (Mycoplasma capricolum subsp. capricolum (strain California kid / ATCC 27343 / NCTC 10154)).